We begin with the raw amino-acid sequence, 430 residues long: Glutamate-1-semialdehyde 2,1-aminomutase (430 aa).

Position 267 is an N6-(pyridoxal phosphate)lysine (Lys-267).

Belongs to the class-III pyridoxal-phosphate-dependent aminotransferase family. HemL subfamily. Homodimer. The cofactor is pyridoxal 5'-phosphate.

The protein localises to the cytoplasm. The catalysed reaction is (S)-4-amino-5-oxopentanoate = 5-aminolevulinate. It participates in porphyrin-containing compound metabolism; protoporphyrin-IX biosynthesis; 5-aminolevulinate from L-glutamyl-tRNA(Glu): step 2/2. This is Glutamate-1-semialdehyde 2,1-aminomutase from Anaeromyxobacter sp. (strain K).